Here is an 877-residue protein sequence, read N- to C-terminus: MTGNEIRESYLKFFEKKGHKILPSASLIPLNDPSILWTAAGMVPFKPFFTGAAKPEYTRVTTCQKCIRTPDIESVGKTARHHTFFEMLGNFSFGDYFKESAIPWAWEFVTEHLRLPADKLWISIFLDDDEAFEIWNKTVGVPAGRIVRMGKDTNFWEIGVGPCGPCSEIYVDLGAERGCGSPECKVGCDCDRFLEIWNLVFIQFFKDEEGNYTPLTSKGIDTGFGLERVASVMQGVPTNFDTDLFREIMDFTAGLFGLKYGVDGRVDVALKVIADHCRAITFAVADGALPSNEGRGYVIRRLLRRAVRFGRLLGIEDPFLHEVSGAVVRQMGRVYPELVTQREHVFRVIRREEERFGETLAQGTEMLNRLIAEARQAGSAVVSGEDAFRLYDTYGFPLELTQEMAGEQGLTVDTDGFGRAMEEQRQRARSARQETDYISGRDAMFKKMREEVGETVFVGYDALEATGRVLRIVQGGKRLESAQAGEEVEFILDVTPFYAESGGQVSDRGKVTAADLEVEIHEVTKPVENLFVHRGKVVAGILKEHDTVTARVDPARRAATCRNHSATHLLHKALKEVLGGHVNQAGSLVEPERLRFDFTHYAAATPEELQKVEELVNRMVLSALPVEAFETSLAEARKMGAAALFGEKYGERVRVVKMGDFSLELCGGTHLRNTAEVGLFKLLGESSVGAGLRRIEAVTGEGALSYVKAKEEQLAEIARLVKAAPHEAVRRVEGLLQTVRDLEAENEALQARLARYQVQDLMDRLREVKGVKVLAGQAAAPDMDSLRGMVDLLRDRVGSGVIVLGSAGENRVNLVAAVTKDLVEKGLHAGKLVKELAPVVGGGGGGRPEMAQAGGKDPSRLKEALEKTYKAVESQLK.

Zn(2+) contacts are provided by His-564, His-568, Cys-666, and His-670.

The protein belongs to the class-II aminoacyl-tRNA synthetase family. Zn(2+) serves as cofactor.

Its subcellular location is the cytoplasm. The enzyme catalyses tRNA(Ala) + L-alanine + ATP = L-alanyl-tRNA(Ala) + AMP + diphosphate. Its function is as follows. Catalyzes the attachment of alanine to tRNA(Ala) in a two-step reaction: alanine is first activated by ATP to form Ala-AMP and then transferred to the acceptor end of tRNA(Ala). Also edits incorrectly charged Ser-tRNA(Ala) and Gly-tRNA(Ala) via its editing domain. The chain is Alanine--tRNA ligase from Pelotomaculum thermopropionicum (strain DSM 13744 / JCM 10971 / SI).